Consider the following 474-residue polypeptide: Protein Rv3254 (474 aa).

Positions Met-1–Arg-4 are excised as a propeptide.

The polypeptide is Protein Rv3254 (Mycobacterium tuberculosis (strain ATCC 25618 / H37Rv)).